We begin with the raw amino-acid sequence, 335 residues long: MEAKIDELINNDPVWSSQNESLISKPYNHILLKPGKNFRLNLIVQINRVMNLPKDQLAIVSQIVELLHNSSLLIDDIEDNAPLRRGQTTSHLIFGVPSTINTANYMYFRAMQLVSQLTTKEPLYHNLITIFNEELINLHRGQGLDIYWRDFLPEIIPTQEMYLNMVMNKTGGLFRLTLRLMEALSPSSHHGHSLVPFINLLGIIYQIRDDYLNLKDFQMSSEKGFAEDITEGKLSFPIVHALNFTKTKGQTEQHNEILRILLLRTSDKDIKLKLIQILEFDTNSLAYTKNFINQLVNMIKNDNENKYLPDLASHSDTATNLHDELLYIIDHLSEL.

Positions 36, 39, and 68 each coordinate isopentenyl diphosphate. 2 residues coordinate Mg(2+): Asp75 and Asp79. Arg84 is a binding site for dimethylallyl diphosphate. Arg85 serves as a coordination point for isopentenyl diphosphate. Positions 169, 170, 206, 213, 223, and 233 each coordinate dimethylallyl diphosphate.

Belongs to the FPP/GGPP synthase family. The cofactor is Mg(2+).

It is found in the cytoplasm. The catalysed reaction is isopentenyl diphosphate + dimethylallyl diphosphate = (2E)-geranyl diphosphate + diphosphate. It carries out the reaction isopentenyl diphosphate + (2E)-geranyl diphosphate = (2E,6E)-farnesyl diphosphate + diphosphate. It catalyses the reaction isopentenyl diphosphate + (2E,6E)-farnesyl diphosphate = (2E,6E,10E)-geranylgeranyl diphosphate + diphosphate. The protein operates within isoprenoid biosynthesis; farnesyl diphosphate biosynthesis; farnesyl diphosphate from geranyl diphosphate and isopentenyl diphosphate: step 1/1. Its pathway is isoprenoid biosynthesis; geranyl diphosphate biosynthesis; geranyl diphosphate from dimethylallyl diphosphate and isopentenyl diphosphate: step 1/1. It functions in the pathway isoprenoid biosynthesis; geranylgeranyl diphosphate biosynthesis; geranylgeranyl diphosphate from farnesyl diphosphate and isopentenyl diphosphate: step 1/1. Catalyzes the trans-addition of the 3 molecules of IPP onto DMAPP to form geranylgeranyl pyrophosphate. Required for the membrane attachment of YPT1 and SEC4. May be involved in vesicle trafficking and protein sorting. The sequence is that of Geranylgeranyl pyrophosphate synthase BTS1 (BTS1) from Saccharomyces cerevisiae (strain ATCC 204508 / S288c) (Baker's yeast).